The sequence spans 510 residues: Protein ERGIC-53 (510 aa).

The first 30 residues, 1 to 30 (MAGSRQRGLRARVRPLFCALLLSLGRFVRG), serve as a signal peptide directing secretion. Topologically, residues 31–477 (DGVGGDPAVA…ELPPFPSCLS (447 aa)) are lumenal. The L-type lectin-like domain occupies 44-267 (RRFEYKYSFK…DVLSFLTFQL (224 aa)). Residues serine 88 and aspartate 121 each contribute to the a carbohydrate site. The Ca(2+) site is built by aspartate 152, phenylalanine 154, and asparagine 156. The a carbohydrate site is built by asparagine 156 and histidine 178. Position 181 (aspartate 181) interacts with Ca(2+). A disulfide bridge connects residues cysteine 190 and cysteine 230. Residue 251–253 (GGL) participates in a carbohydrate binding. The residue at position 425 (serine 425) is a Phosphoserine. Residues 478–498 (TVHFIIFVVVQTVLFIGYIMY) traverse the membrane as a helical segment. Over 499 to 510 (RSQQEAAAKKFF) the chain is Cytoplasmic. The tract at residues 499–510 (RSQQEAAAKKFF) is mediates interaction with RAB3GAP1, RAB3GAP2 and UBXN6. The short motif at 509–510 (FF) is the ER export motif element.

In terms of assembly, exists both as a covalent disulfide-linked homohexamer, and a complex of three disulfide-linked dimers non-covalently kept together. Interacts with MCFD2. May interact with TMEM115. Interacts with RAB3GAP1 and RAB3GAP2. Interacts with UBXN6. Interacts with SERPINA1/alpha1-antitrypsin. Interacts with BET1. The N-terminal may be partly blocked. In terms of tissue distribution, ubiquitous.

The protein localises to the endoplasmic reticulum-Golgi intermediate compartment membrane. Its subcellular location is the golgi apparatus membrane. It is found in the endoplasmic reticulum membrane. In terms of biological role, mannose-specific lectin. May recognize sugar residues of glycoproteins, glycolipids, or glycosylphosphatidyl inositol anchors and may be involved in the sorting or recycling of proteins, lipids, or both. The LMAN1-MCFD2 complex forms a specific cargo receptor for the ER-to-Golgi transport of selected proteins. This is Protein ERGIC-53 (LMAN1) from Homo sapiens (Human).